We begin with the raw amino-acid sequence, 281 residues long: Very long chain fatty acid elongase 7 (281 aa).

A2 carries the post-translational modification N-acetylalanine. Residues 2–27 lie on the Lumenal side of the membrane; that stretch reads AFSDLTSRTVRFYDNWIKDADPRVEN. Residues 28 to 48 form a helical membrane-spanning segment; sequence WLLMSSPLPQTIILGLYVYFV. Residues 49-72 lie on the Cytoplasmic side of the membrane; sequence TSLGPKLMENRKPFELKKAMITYN. The helical transmembrane segment at 73-93 threads the bilayer; sequence FFIVLFSVYMCYEFVMSGWGT. Topologically, residues 94–115 are lumenal; sequence GYSFRCDIVDYSQSPRAMRMVH. The cysteines at positions 99 and 231 are disulfide-linked. Residues 116–136 traverse the membrane as a helical segment; it reads TCWLYYFSKFIELFDTIFFVL. K124, R137, K139, Q142, and H147 together coordinate 3-oxoeicosanoyl-CoA. Over 137-142 the chain is Cytoplasmic; the sequence is RKKNSQ. Residues 143-162 traverse the membrane as a helical segment; the sequence is VTFLHVFHHTIMPWTWWFGV. The HxxHH motif motif lies at 147-151; sequence HVFHH. H150 acts as the Nucleophile in catalysis. At 163–176 the chain is on the lumenal side; that stretch reads KFAAGGLGTFHALL. Residues 177–197 traverse the membrane as a helical segment; the sequence is NTAVHVVMYFYYGLCAMGPAY. 3-oxoeicosanoyl-CoA is bound by residues Y187, K204, T208, and Q211. Residues 198-206 are Cytoplasmic-facing; it reads QKYLWWKKH. A helical membrane pass occupies residues 207 to 227; the sequence is LTSLQLVQFVLVTVHIGQIFF. Residues 228–236 lie on the Lumenal side of the membrane; that stretch reads MEDCNYQYP. A helical membrane pass occupies residues 237–257; that stretch reads VFLYIIMSYGCIFLLLFLHFW. At 258-281 the chain is on the cytoplasmic side; sequence YRAYTKGQRLPKTMENGNCKSKHH. Residue R266 participates in 3-oxoeicosanoyl-CoA binding. The Di-lysine motif signature appears at 277–281; the sequence is KSKHH.

The protein belongs to the ELO family. ELOVL7 subfamily. As to quaternary structure, homodimer. Interacts with TECR.

The protein resides in the endoplasmic reticulum membrane. The catalysed reaction is a very-long-chain acyl-CoA + malonyl-CoA + H(+) = a very-long-chain 3-oxoacyl-CoA + CO2 + CoA. The enzyme catalyses eicosanoyl-CoA + malonyl-CoA + H(+) = 3-oxodocosanoyl-CoA + CO2 + CoA. It carries out the reaction (5Z,8Z,11Z,14Z)-eicosatetraenoyl-CoA + malonyl-CoA + H(+) = (7Z,10Z,13Z,16Z)-3-oxodocosatetraenoyl-CoA + CO2 + CoA. It catalyses the reaction (6Z,9Z,12Z)-octadecatrienoyl-CoA + malonyl-CoA + H(+) = (8Z,11Z,14Z)-3-oxoeicosatrienoyl-CoA + CO2 + CoA. The catalysed reaction is (9Z,12Z)-octadecadienoyl-CoA + malonyl-CoA + H(+) = (11Z,14Z)-3-oxoicosa-11,14-dienoyl-CoA + CO2 + CoA. The enzyme catalyses (9Z)-octadecenoyl-CoA + malonyl-CoA + H(+) = 3-oxo-(11Z)-eicosenoyl-CoA + CO2 + CoA. It carries out the reaction octadecanoyl-CoA + malonyl-CoA + H(+) = 3-oxoeicosanoyl-CoA + CO2 + CoA. It catalyses the reaction hexadecanoyl-CoA + malonyl-CoA + H(+) = 3-oxooctadecanoyl-CoA + CO2 + CoA. The catalysed reaction is (9Z,12Z,15Z)-octadecatrienoyl-CoA + malonyl-CoA + H(+) = (11Z,14Z,17Z)-3-oxoeicosatrienoyl-CoA + CO2 + CoA. The protein operates within lipid metabolism; fatty acid biosynthesis. Functionally, catalyzes the first and rate-limiting reaction of the four reactions that constitute the long-chain fatty acids elongation cycle. This endoplasmic reticulum-bound enzymatic process allows the addition of 2 carbons to the chain of long- and very long-chain fatty acids (VLCFAs) per cycle. Condensing enzyme with higher activity toward C18 acyl-CoAs, especially C18:3(n-3) acyl-CoAs and C18:3(n-6)-CoAs. Also active toward C20:4-, C18:0-, C18:1-, C18:2- and C16:0-CoAs, and weakly toward C20:0-CoA. Little or no activity toward C22:0-, C24:0-, or C26:0-CoAs. May participate in the production of saturated and polyunsaturated VLCFAs of different chain lengths that are involved in multiple biological processes as precursors of membrane lipids and lipid mediators. The polypeptide is Very long chain fatty acid elongase 7 (Rattus norvegicus (Rat)).